Reading from the N-terminus, the 246-residue chain is Proteasome subunit alpha type-6 (246 aa).

It belongs to the peptidase T1A family. In terms of assembly, the 26S proteasome consists of a 20S proteasome core and two 19S regulatory subunits. The 20S proteasome core is composed of 28 subunits that are arranged in four stacked rings, resulting in a barrel-shaped structure. The two end rings are each formed by seven alpha subunits, and the two central rings are each formed by seven beta subunits. The catalytic chamber with the active sites is on the inside of the barrel.

It is found in the cytoplasm. Its subcellular location is the nucleus. Its function is as follows. The proteasome is a multicatalytic proteinase complex which is characterized by its ability to cleave peptides with Arg, Phe, Tyr, Leu, and Glu adjacent to the leaving group at neutral or slightly basic pH. The proteasome has an ATP-dependent proteolytic activity. The polypeptide is Proteasome subunit alpha type-6 (PAA1) (Oryza sativa subsp. japonica (Rice)).